The sequence spans 348 residues: Putative transport protein HP_0567 (348 aa).

8 helical membrane passes run 6–26 (FFWI…QDFL), 27–47 (MDAL…VFLD), 56–76 (SFLC…FIVY), 143–163 (LKLI…FYYG), 194–214 (IVLL…GVMI), 224–244 (LGIL…LIWI), 266–286 (SILL…IVFI), and 300–320 (MLIF…GIIV).

It belongs to the autoinducer-2 exporter (AI-2E) (TC 2.A.86) family.

The protein resides in the cell membrane. The chain is Putative transport protein HP_0567 from Helicobacter pylori (strain ATCC 700392 / 26695) (Campylobacter pylori).